A 365-amino-acid polypeptide reads, in one-letter code: UDP-N-acetylglucosamine--N-acetylmuramyl-(pentapeptide) pyrophosphoryl-undecaprenol N-acetylglucosamine transferase (365 aa).

Residues 19–21 (TGG), Asn-131, Arg-170, Ser-201, Ile-255, 274–279 (ALTVTE), and Gln-300 each bind UDP-N-acetyl-alpha-D-glucosamine.

This sequence belongs to the glycosyltransferase 28 family. MurG subfamily.

The protein resides in the cell inner membrane. The enzyme catalyses di-trans,octa-cis-undecaprenyl diphospho-N-acetyl-alpha-D-muramoyl-L-alanyl-D-glutamyl-meso-2,6-diaminopimeloyl-D-alanyl-D-alanine + UDP-N-acetyl-alpha-D-glucosamine = di-trans,octa-cis-undecaprenyl diphospho-[N-acetyl-alpha-D-glucosaminyl-(1-&gt;4)]-N-acetyl-alpha-D-muramoyl-L-alanyl-D-glutamyl-meso-2,6-diaminopimeloyl-D-alanyl-D-alanine + UDP + H(+). It participates in cell wall biogenesis; peptidoglycan biosynthesis. Its function is as follows. Cell wall formation. Catalyzes the transfer of a GlcNAc subunit on undecaprenyl-pyrophosphoryl-MurNAc-pentapeptide (lipid intermediate I) to form undecaprenyl-pyrophosphoryl-MurNAc-(pentapeptide)GlcNAc (lipid intermediate II). This Acinetobacter baumannii (strain ACICU) protein is UDP-N-acetylglucosamine--N-acetylmuramyl-(pentapeptide) pyrophosphoryl-undecaprenol N-acetylglucosamine transferase.